A 78-amino-acid polypeptide reads, in one-letter code: Beta-defensin 29 (78 aa).

An N-terminal signal peptide occupies residues 1 to 23 (MPVTKPYFVTVAVLLILVDKTTG). 3 cysteine pairs are disulfide-bonded: cysteine 40–cysteine 67, cysteine 47–cysteine 61, and cysteine 51–cysteine 68.

This sequence belongs to the beta-defensin family.

The protein resides in the secreted. Its function is as follows. Has antibacterial activity. This chain is Beta-defensin 29 (Defb29), found in Rattus norvegicus (Rat).